The sequence spans 189 residues: uncharacterized protein (189 aa).

The N-terminal stretch at 1 to 23 (MVPPKPALWALLLALLGTAPSRA) is a signal peptide. The N-linked (GlcNAc...) asparagine glycan is linked to N72.

This is an uncharacterized protein from Homo sapiens (Human).